The following is an 883-amino-acid chain: Translation initiation factor IF-2 (883 aa).

A disordered region spans residues 118 to 261 (VARESEAAPA…KKKEAFKKTE (144 aa)). The span at 124-150 (AAPAEEPVAAAVKPASEPPVVQKAPVA) shows a compositional bias: low complexity. Composition is skewed to basic and acidic residues over residues 183 to 200 (PADR…EERI) and 252 to 261 (KKKEAFKKTE). A tr-type G domain is found at 383–552 (KRPPVVTIMG…LLQADVMDLK (170 aa)). The interval 392-399 (GHVDHGKT) is G1. 392–399 (GHVDHGKT) serves as a coordination point for GTP. A G2 region spans residues 417-421 (GITQH). Positions 438-441 (DTPG) are G3. GTP contacts are provided by residues 438–442 (DTPGH) and 492–495 (NKID). Residues 492–495 (NKID) form a G4 region. The interval 528 to 530 (SAK) is G5.

Belongs to the TRAFAC class translation factor GTPase superfamily. Classic translation factor GTPase family. IF-2 subfamily.

Its subcellular location is the cytoplasm. In terms of biological role, one of the essential components for the initiation of protein synthesis. Protects formylmethionyl-tRNA from spontaneous hydrolysis and promotes its binding to the 30S ribosomal subunits. Also involved in the hydrolysis of GTP during the formation of the 70S ribosomal complex. This Geobacter sulfurreducens (strain ATCC 51573 / DSM 12127 / PCA) protein is Translation initiation factor IF-2.